A 601-amino-acid chain; its full sequence is MCGIVGYIGYDNAKELLLKGLEKLEYRGYDSAGIAVVNDDGTKLFKEKGRIAELRKVADNSDEDGTLGIGHTRWATHGVPNYENSHPHQSTSGRFTLVHNGVIENYEELKAEYLSDVTFSSETDTEVIVQLVDYFSRQGLATEDAFTKVVKLLHGSYALGLLDDNDKDTIYVAKNKSPLLVGVGEGFNVIASDALAMLQTTNQYKEIHDHEIVIVKRDTVEIKDLEGHIQQRDTYTAEIDAADAEKGVYDHYMLKEIHEQPAVMRRIIQEYQDEKGNLKIDSEIINDVADADRIYIVAAGTSYHAGLVGKEFIEKWAGVPTEVHVASEFVYNMPLLSEKPLFIYISQSGETADSRAVLVETNKLGHKSLTITNVAGSTLSREADHTLLLHAGPEIAVASTKAYTAQIAVLSILSQIVAKNHGRETDVDLLRELAKVTTAIETIVDDAPKMEQIATDFLKTTRNAFFIGRTIDYNVSLEGALKLKEISYIQAEGFAGGELKHGTIALIEDGTPVIGLATQENVNLSIRGNMKEVVARGAYPCMISMEGLNKEGDTYVIPQVHELLTPLVSVVTMQLISYYAALQRDLDVDKPRNLAKSVTVE.

The active-site Nucleophile; for GATase activity is C2. The Glutamine amidotransferase type-2 domain maps to 2–218 (CGIVGYIGYD…DHEIVIVKRD (217 aa)). 2 SIS domains span residues 284–423 (IIND…NHGR) and 453–591 (IATD…VDKP). K596 functions as the For Fru-6P isomerization activity in the catalytic mechanism.

In terms of assembly, homodimer.

The protein resides in the cytoplasm. The catalysed reaction is D-fructose 6-phosphate + L-glutamine = D-glucosamine 6-phosphate + L-glutamate. Catalyzes the first step in hexosamine metabolism, converting fructose-6P into glucosamine-6P using glutamine as a nitrogen source. This chain is Glutamine--fructose-6-phosphate aminotransferase [isomerizing], found in Staphylococcus epidermidis (strain ATCC 35984 / DSM 28319 / BCRC 17069 / CCUG 31568 / BM 3577 / RP62A).